A 419-amino-acid chain; its full sequence is UDP-N-acetylglucosamine 1-carboxyvinyltransferase (419 aa).

22-23 (KN) serves as a coordination point for phosphoenolpyruvate. Arg91 is a binding site for UDP-N-acetyl-alpha-D-glucosamine. Cys115 (proton donor) is an active-site residue. At Cys115 the chain carries 2-(S-cysteinyl)pyruvic acid O-phosphothioketal. UDP-N-acetyl-alpha-D-glucosamine-binding positions include 120 to 124 (RPVDL), 160 to 163 (KVSV), Asp305, and Ile327.

Belongs to the EPSP synthase family. MurA subfamily.

The protein resides in the cytoplasm. The enzyme catalyses phosphoenolpyruvate + UDP-N-acetyl-alpha-D-glucosamine = UDP-N-acetyl-3-O-(1-carboxyvinyl)-alpha-D-glucosamine + phosphate. The protein operates within cell wall biogenesis; peptidoglycan biosynthesis. Its function is as follows. Cell wall formation. Adds enolpyruvyl to UDP-N-acetylglucosamine. The sequence is that of UDP-N-acetylglucosamine 1-carboxyvinyltransferase from Klebsiella pneumoniae subsp. pneumoniae (strain ATCC 700721 / MGH 78578).